The following is a 548-amino-acid chain: Calcium-transporting ATPase (548 aa).

The first 21 residues, 1–21, serve as a signal peptide directing secretion; that stretch reads MNFKSTVITAMCCFFSFAVLA. Residues aspartate 37 and threonine 78 each coordinate a divalent metal cation. The active-site Phosphothreonine intermediate is the threonine 78. Substrate contacts are provided by residues asparagine 99 and 160 to 162; that span reads KDR. The short motif at 179–187 is the ATP-binding element; sequence DGKTGDWIT. Positions 305, 309, 352, 353, and 488 each coordinate a divalent metal cation.

Mg(2+) is required as a cofactor.

The protein localises to the cell inner membrane. It catalyses the reaction Ca(2+)(in) + ATP + H2O = Ca(2+)(out) + ADP + phosphate + H(+). Completely inhibited by vanadate(3-). Also inhibited by lanthanoid atom and phosphate. Not inhibited by N-ethylmaleimide, 1,3-dicyclohexylcarbodiimide, oligomycin, ouabain, valinomycin, nigericin, thapsigargin, cyclopiazonic acid or fluorescein isothiocyanate. Its function is as follows. Catalyzes the hydrolysis of ATP coupled with the transport of calcium. Has some hydrolysis activity also with dATP, GTP, UTP, ITP and 4-nitrophenyl phosphate as substrate. No activity with ADP, CTP, acetyl dihydrogen phosphate or AMP-PNP as substrate. The protein is Calcium-transporting ATPase of Myroides odoratus (Flavobacterium odoratum).